We begin with the raw amino-acid sequence, 310 residues long: UPF0761 membrane protein VSAL_I2938 (310 aa).

Transmembrane regions (helical) follow at residues 34–54, 97–117, 136–156, 178–198, 207–227, and 242–262; these read YMAY…LSVL, MTAV…SAID, FSLY…SLAA, LLGW…YLLV, HALV…VGFA, and ALAA…IVLI.

The protein belongs to the UPF0761 family.

It is found in the cell inner membrane. The sequence is that of UPF0761 membrane protein VSAL_I2938 from Aliivibrio salmonicida (strain LFI1238) (Vibrio salmonicida (strain LFI1238)).